We begin with the raw amino-acid sequence, 482 residues long: MVDFPGYNLSGAVASFLFILLTMKQSEDFRVIGPAHPILAGVGEDALLTCQLLPKRTTMHVEVRWYRSEPSTPVFVHRDGVEVTEMQMEEYRGWVEWIENGIAKGNVALKIHNIQPSDNGQYWCHFQDGNYCGETSLLLKVAGLGSAPSIHMEGPGESGVQLVCTARGWFPEPQVYWEDIRGEKLLAVSEHRIQDKDGLFYAEATLVVRNASAESVSCLVHNPVLTEEKGSVISLPEKLQTELASLKVNGPSQPILVRVGEDIQLTCYLSPKANAQSMEVRWDRSHRYPAVHVYMDGDHVAGEQMAEYRGRTVLVSDAIDEGRLTLQILSARPSDDGQYRCLFEKDDVYQEASLDLKVVSLGSSPLITVEGQEDGEMQPMCSSDGWFPQPHVPWRDMEGKTIPSSSQALTQGSHGLFHVQTLLRVTNISAVDVTCSISIPFLGEEKIATFSLSESRMTFLWKTLLVWGLLLAVAVGLPRKRS.

Residues 1-6 (MVDFPG) are Cytoplasmic-facing. A helical; Signal-anchor for type II membrane protein transmembrane segment spans residues 7 to 23 (YNLSGAVASFLFILLTM). Residues 24 to 482 (KQSEDFRVIG…VAVGLPRKRS (459 aa)) are Extracellular-facing. 3 consecutive Ig-like V-type domains span residues 29–140 (FRVI…LLLK), 142–234 (AGLG…SVIS), and 236–355 (PEKL…ASLD). Intrachain disulfides connect C50–C124, C164–C218, and C267–C341. N-linked (GlcNAc...) asparagine glycosylation is present at N210. The N-linked (GlcNAc...) asparagine glycan is linked to N427.

It belongs to the immunoglobulin superfamily. BTN/MOG family. In terms of tissue distribution, expressed in brain, heart, kidney, liver, pancreas, ovary, leukocyte, small intestine, testis and thymus.

The protein resides in the membrane. Functionally, negative regulator of T-cell proliferation. This Homo sapiens (Human) protein is Butyrophilin-like protein 2.